A 430-amino-acid polypeptide reads, in one-letter code: Spermatogenic leucine zipper protein 1 (430 aa).

Residues 1 to 25 (MASSAKSAEMPTISKTVNPTPDPHQ) form a disordered region. Positions 62-102 (EQQTAQKFNNLLKEIKDILKNMAGFEEKITEAKELFEETNI) form a coiled coil. Serine 107 is modified (phosphoserine). The segment at 166–177 (KINEMLSTNLPV) is helix-loop-helix motif. Residues 178 to 244 (SLAPEKEDNE…NVQEETMKIR (67 aa)) are basic motif. Coiled-coil stretches lie at residues 214 to 269 (LEEK…KLIK) and 316 to 351 (SLQL…TLQE). A Phosphoserine modification is found at serine 258. The segment at 303 to 324 (LEEQVKKLSHDTYSLQLMAALL) is leucine-zipper.

Interacts with PPP1CC isoform gamma-2. Post-translationally, phosphorylated by MAPK1/ERK2 and MAPK3/ERK1. As to expression, specifically and strongly expressed in the testis. Expressed in several tumor cell lines.

The protein localises to the cytoplasm. It localises to the nucleus. In terms of biological role, transcription factor that binds to the DNA sequence 5'-CANNTG-3'(E box) and the G-box motif. May play an important role in the regulation of cell proliferation and differentiation during spermatogenesis. The chain is Spermatogenic leucine zipper protein 1 (SPZ1) from Homo sapiens (Human).